A 527-amino-acid chain; its full sequence is Serine/threonine-protein kinase NLK (527 aa).

2 sufficient for interaction with DAPK3 regions span residues 1 to 125 and 124 to 416; these read MSLC…KAHH and HHHQ…SKRI. Required for interaction with TAB2 stretches follow at residues 1–304 and 434–527; these read MSLC…VVTQ and YHTC…LVWE. Disordered stretches follow at residues 22–72 and 90–139; these read AAAA…SSAA and QQPY…LDIE. The span at 26 to 54 shows a compositional bias: basic residues; sequence GHHHHHHHHLPHLPPPHLHHHHHPQHHLH. A compositionally biased stretch (low complexity) spans 103-119; sequence PGPAAAAPAQVQAAAAA. A compositionally biased stretch (basic residues) spans 122–131; it reads KAHHHQHSHH. One can recognise a Protein kinase domain in the interval 138 to 427; sequence IEPDRPIGYG…AKDALAHPYL (290 aa). Residues 144 to 152 and Lys-167 contribute to the ATP site; that span reads IGYGAFGVV. Asp-264 functions as the Proton acceptor in the catalytic mechanism. Thr-298 carries the phosphothreonine; by autocatalysis modification. The short motif at 298–300 is the TQE element; it reads TQE. The segment at 428–527 is required for homodimerization and kinase activation and localization to the nucleus; the sequence is DEGRLRYHTC…EMPPSPLVWE (100 aa). Residue Ser-522 is modified to Phosphoserine.

The protein belongs to the protein kinase superfamily. CMGC Ser/Thr protein kinase family. MAP kinase subfamily. As to quaternary structure, homodimer. Homodimerization is required for intermolecular autophosphorylation, kinase activation and nuclear localization. Interacts with RNF138/NARF. Interacts with FOXO1 and FOXO3. Interacts with the upstream activating kinases HIPK2 and MAP3K7/TAK1. Interaction with MAP3K7/TAK1 seems to be indirect, and may be mediated by other proteins such as STAT3, TAB1 and TAB2. Interacts with and phosphorylates a number of transcription factors including FOXO4, LEF1, MYB, MYBL1, MYBL2, NOTCH1 and TCF7L2/TCF4. May interact with components of cullin-RING-based SCF (SKP1-CUL1-F-box protein) E3 ubiquitin-protein ligase complexes. Interacts with MEF2A. Interacts with ATF5; the interaction stabilizes ATF5 at the protein level in a kinase-independent manner. The cofactor is Mg(2+). Phosphorylated on Thr-298. Intermolecular autophosphorylation on Thr-298 activates the enzyme. As to expression, expressed at high levels in the brain, and at lower levels in heart, kidney, lung and liver.

Its subcellular location is the nucleus. It localises to the cytoplasm. It carries out the reaction L-seryl-[protein] + ATP = O-phospho-L-seryl-[protein] + ADP + H(+). It catalyses the reaction L-threonyl-[protein] + ATP = O-phospho-L-threonyl-[protein] + ADP + H(+). With respect to regulation, activated by the non-canonical Wnt signaling pathway, in which WNT5A leads to activation of MAP3K7/TAK1 and HIPK2, which subsequently phosphorylates and activates this protein. Activated by dimerization and subsequent intermolecular autophosphorylation on Thr-298. Other cytokines such as IL6 may also activate this regulatory circuit. In terms of biological role, serine/threonine-protein kinase that regulates a number of transcription factors with key roles in cell fate determination. Positive effector of the non-canonical Wnt signaling pathway, acting downstream of WNT5A, MAP3K7/TAK1 and HIPK2. Negative regulator of the canonical Wnt/beta-catenin signaling pathway. Binds to and phosphorylates TCF7L2/TCF4 and LEF1, promoting the dissociation of the TCF7L2/LEF1/beta-catenin complex from DNA, as well as the ubiquitination and subsequent proteolysis of LEF1. Together these effects inhibit the transcriptional activation of canonical Wnt/beta-catenin target genes. Negative regulator of the Notch signaling pathway. Binds to and phosphorylates NOTCH1, thereby preventing the formation of a transcriptionally active ternary complex of NOTCH1, RBPJ/RBPSUH and MAML1. Negative regulator of the MYB family of transcription factors. Phosphorylation of MYB leads to its subsequent proteolysis while phosphorylation of MYBL1 and MYBL2 inhibits their interaction with the coactivator CREBBP. Other transcription factors may also be inhibited by direct phosphorylation of CREBBP itself. Acts downstream of IL6 and MAP3K7/TAK1 to phosphorylate STAT3, which is in turn required for activation of NLK by MAP3K7/TAK1. Upon IL1B stimulus, cooperates with ATF5 to activate the transactivation activity of C/EBP subfamily members. Phosphorylates ATF5 but also stabilizes ATF5 protein levels in a kinase-independent manner. Acts as an inhibitor of the mTORC1 complex in response to osmotic stress by mediating phosphorylation of RPTOR, thereby preventing recruitment of the mTORC1 complex to lysosomes. The sequence is that of Serine/threonine-protein kinase NLK from Mus musculus (Mouse).